The sequence spans 85 residues: MASLLSPIIKLLSYVIRCYQLIISPLIKPHCRFLPTCSQYSITAIHRFGIFKGIWLTLIRILRCNPWSQGGEDQVPLNIFDKREY.

The protein belongs to the UPF0161 family.

It is found in the cell membrane. Its function is as follows. Could be involved in insertion of integral membrane proteins into the membrane. The chain is Putative membrane protein insertion efficiency factor from Baumannia cicadellinicola subsp. Homalodisca coagulata.